We begin with the raw amino-acid sequence, 636 residues long: Chaperone protein DnaK (636 aa).

The segment at Glu579–Asn636 is disordered. Low complexity predominate over residues Ala590–Gln623.

The protein belongs to the heat shock protein 70 family.

Acts as a chaperone. This Nitrosopumilus maritimus (strain SCM1) protein is Chaperone protein DnaK.